The chain runs to 1771 residues: Gag-Pro-Pol polyprotein (1771 aa).

G2 is lipidated: N-myristoyl glycine; by host. Residues 101–161 constitute a propeptide that is removed on maturation; the sequence is AAVAQTEEIL…TKKPKRFPVL (61 aa). Polar residues-rich tracts occupy residues 113 to 125 and 140 to 152; these read NSQT…SQNP and KSSS…LSST. The disordered stretch occupies residues 113–178; sequence NSQTDLTKTS…DPEDPNPSEV (66 aa). A PPXY motif motif is present at residues 202–205; that stretch reads PPPY. Positions 210-213 match the PTAP/PSAP motif motif; the sequence is PSAP. Residues 216–257 adopt a coiled-coil conformation; it reads MAVVNPKEELKEKIAQLEEQIKLEELHQALISKLQKLKTGNE. The segment at 260 to 279 is disordered; the sequence is THPDTAGGLSRTPHWPGQHI. Residues 335–338 carry the PTAP/PSAP motif motif; sequence ATAP. CCHC-type zinc fingers lie at residues 547-564 and 576-593; these read GCCF…NCHE and GLCP…ECKS. Residues 592-626 are disordered; the sequence is KSKTDNQGNPIPPHQGNRVEGPAPGPETSLWGSQL. Positions 780 to 856 constitute a Peptidase A2 domain; that stretch reads FTGLIDTGAD…LPVNLWGRDL (77 aa). The active-site Protease; shared with dimeric partner is D785. The 47-residue stretch at 867–913 folds into the G-patch domain; it reads PNDIVTAQMLAQGYSPGKGLGKKENGILHPIPNQGQSNKKGFGNFLT. Residues 959–1147 form the Reverse transcriptase domain; the sequence is LEAGHITESS…DPYTYLGFEL (189 aa). Residues D1024, D1099, D1100, D1370, E1399, D1420, and D1484 each contribute to the Mg(2+) site. Positions 1361–1492 constitute an RNase H type-1 domain; it reads LNNALLVFTD…ADLATKIVAS (132 aa). The Integrase-type zinc finger occupies 1496 to 1537; the sequence is TNLESAQNAHTLHHLNAQTLRLMFNIPREQARQIVKQCPICV. 4 residues coordinate Zn(2+): H1505, H1509, C1533, and C1536. Residues 1550–1719 enclose the Integrase catalytic domain; the sequence is RGLFPNMIWQ…NPKKQFAMVK (170 aa). Mg(2+) is bound by residues D1561, D1618, and E1654. The segment at residues 1716 to 1765 is a DNA-binding region (integrase-type); that stretch reads AMVKWKDPLDNTWHGPDPVLIWGRGSVCVYSQTYDAARWLPERLVRQVSN.

It belongs to the retroviral Pol polyprotein family. As to quaternary structure, homodimer. In terms of assembly, interacts with the G-patch peptide. Interacts with the reverse transcriptase/ribonuclease H. As to quaternary structure, homotrimer. Mg(2+) serves as cofactor. In terms of processing, released by autocatalytic processing. The protease can undergo further autoprocessing to yield 2 shorter but enzymatically active forms of 12 kDa and 13 kDa. Post-translationally, myristoylated. Myristoylation of the matrix (MA) domain mediates the transport and binding of Gag polyproteins to the host plasma membrane and is required for the assembly of viral particles. Specific enzymatic cleavages in vivo yield mature proteins.

It is found in the virion. The enzyme catalyses DNA(n) + a 2'-deoxyribonucleoside 5'-triphosphate = DNA(n+1) + diphosphate. The catalysed reaction is Endonucleolytic cleavage to 5'-phosphomonoester.. It catalyses the reaction dUTP + H2O = dUMP + diphosphate + H(+). Functionally, matrix protein. Its function is as follows. Nucleocapsid protein p14: Nucleocapsid protein. Capsid protein. In terms of biological role, the aspartyl protease mediates proteolytic cleavages of Gag and Gag-Pol polyproteins during or shortly after the release of the virion from the plasma membrane. Cleavages take place as an ordered, step-wise cascade to yield mature proteins. This process is called maturation. Displays maximal activity during the budding process just prior to particle release from the cell. Functionally, enhances the activity of the reverse transcriptase. May be part of the mature RT. Its function is as follows. RT is a multifunctional enzyme that converts the viral dimeric RNA genome into dsDNA in the cytoplasm, shortly after virus entry into the cell. This enzyme displays a DNA polymerase activity that can copy either DNA or RNA templates, and a ribonuclease H (RNase H) activity that cleaves the RNA strand of RNA-DNA heteroduplexes in a partially processive 3' to 5' endonucleasic mode. Conversion of viral genomic RNA into dsDNA requires many steps. A tRNA binds to the primer-binding site (PBS) situated at the 5' end of the viral RNA. RT uses the 3' end of the tRNA primer to perfom a short round of RNA-dependent minus-strand DNA synthesis. The reading proceeds through the U5 region and ends after the repeated (R) region which is present at both ends of viral RNA. The portion of the RNA-DNA heteroduplex is digested by the RNase H, resulting in a ssDNA product attached to the tRNA primer. This ssDNA/tRNA hybridizes with the identical R region situated at the 3' end of viral RNA. This template exchange, known as minus-strand DNA strong stop transfer, can be either intra- or intermolecular. RT uses the 3' end of this newly synthesized short ssDNA to perfom the RNA-dependent minus-strand DNA synthesis of the whole template. RNase H digests the RNA template except for a polypurine tract (PPT) situated at the 5' end of the genome. It is not clear if both polymerase and RNase H activities are simultaneous. RNase H probably can proceed both in a polymerase-dependent (RNA cut into small fragments by the same RT performing DNA synthesis) and a polymerase-independent mode (cleavage of remaining RNA fragments by free RTs). Secondly, RT performs DNA-directed plus-strand DNA synthesis using the PPT that has not been removed by RNase H as primers. PPT and tRNA primers are then removed by RNase H. The 3' and 5' ssDNA PBS regions hybridize to form a circular dsDNA intermediate. Strand displacement synthesis by RT to the PBS and PPT ends produces a blunt ended, linear dsDNA copy of the viral genome that includes long terminal repeats (LTRs) at both ends. Catalyzes viral DNA integration into the host chromosome, by performing a series of DNA cutting and joining reactions. This chain is Gag-Pro-Pol polyprotein (gag-pro-pol), found in Macaca mulatta (Rhesus macaque).